Reading from the N-terminus, the 397-residue chain is Dual specificity mitogen-activated protein kinase kinase 2 (397 aa).

Positions 1–21 are disordered; sequence MAPKRRPVPLIIAPTGEGQST. Residues 69 to 366 form the Protein kinase domain; it reads FDPICELGAG…LKMLMGHTFI (298 aa). Residues 75–83 and lysine 98 each bind ATP; that span reads LGAGNGGVV. Aspartate 191 serves as the catalytic Proton acceptor. A phosphoserine; by RAF mark is found at serine 219 and serine 223. Residues 284 to 306 form a disordered region; sequence GGAEGHSMSPRQRPPGRPVSGHG.

Belongs to the protein kinase superfamily. STE Ser/Thr protein kinase family. MAP kinase kinase subfamily. In terms of processing, phosphorylation on Ser/Thr by MAP kinase kinase kinases (RAF) positively regulates the kinase activity.

The catalysed reaction is L-seryl-[protein] + ATP = O-phospho-L-seryl-[protein] + ADP + H(+). It carries out the reaction L-threonyl-[protein] + ATP = O-phospho-L-threonyl-[protein] + ADP + H(+). The enzyme catalyses L-tyrosyl-[protein] + ATP = O-phospho-L-tyrosyl-[protein] + ADP + H(+). In terms of biological role, catalyzes the concomitant phosphorylation of a threonine and a tyrosine residue in a Thr-Glu-Tyr sequence located in MAP kinases. This chain is Dual specificity mitogen-activated protein kinase kinase 2 (map2k2), found in Cyprinus carpio (Common carp).